Consider the following 190-residue polypeptide: Guanylate kinase (190 aa).

A Guanylate kinase-like domain is found at 3–185; the sequence is NYIFIISAPS…SLEQLCKYFE (183 aa). Residue 10 to 17 coordinates ATP; sequence APSGAGKS.

The protein belongs to the guanylate kinase family.

It is found in the cytoplasm. It carries out the reaction GMP + ATP = GDP + ADP. Its function is as follows. Essential for recycling GMP and indirectly, cGMP. The polypeptide is Guanylate kinase (Francisella tularensis subsp. holarctica (strain OSU18)).